Reading from the N-terminus, the 116-residue chain is Phycoerythrin alpha-3 subunit (116 aa).

The (2R,3E)-phycoerythrobilin site is built by Ser53, Glu63, Arg64, Cys67, and Lys85.

It belongs to the phycoerythrin family. Heterotetramer of 2 different alpha chains and 2 identical beta chains which form 2 alpha-beta heterodimers within the heterotetramer. The two alpha-beta heterodimers are rotated to an open configuration in contrast to the closed configuration found in other cryptophyte species due to the insertion of a single amino acid, Asp-65, in a conserved region of the alpha chain. In the open form, the central chromophores are not in physical contact but are separated by a water-filled channel. Contains three phycoerythrobilin chromophores with binding mediated by both the alpha and beta subunits.

Its subcellular location is the plastid. It localises to the chloroplast thylakoid membrane. Light-harvesting photosynthetic tetrapyrrole chromophore-protein from the phycobiliprotein complex. This chain is Phycoerythrin alpha-3 subunit, found in Hemiselmis andersenii (Cryptophyte alga).